A 326-amino-acid polypeptide reads, in one-letter code: GMP reductase (326 aa).

Cys175 functions as the Thioimidate intermediate in the catalytic mechanism. 204–227 (IIADGGIRTHGDIAKSVRFGATMV) contributes to the NADP(+) binding site.

Belongs to the IMPDH/GMPR family. GuaC type 2 subfamily.

It carries out the reaction IMP + NH4(+) + NADP(+) = GMP + NADPH + 2 H(+). Its function is as follows. Catalyzes the irreversible NADPH-dependent deamination of GMP to IMP. It functions in the conversion of nucleobase, nucleoside and nucleotide derivatives of G to A nucleotides, and in maintaining the intracellular balance of A and G nucleotides. This Bacillus licheniformis (strain ATCC 14580 / DSM 13 / JCM 2505 / CCUG 7422 / NBRC 12200 / NCIMB 9375 / NCTC 10341 / NRRL NRS-1264 / Gibson 46) protein is GMP reductase.